We begin with the raw amino-acid sequence, 916 residues long: Isoleucine--tRNA ligase (916 aa).

A 'HIGH' region motif is present at residues Pro57 to His67. Position 554 (Glu554) interacts with L-isoleucyl-5'-AMP. Residues Lys595 to Ser599 carry the 'KMSKS' region motif. Lys598 is a binding site for ATP. Positions 885, 888, 905, and 908 each coordinate Zn(2+).

It belongs to the class-I aminoacyl-tRNA synthetase family. IleS type 1 subfamily. Monomer. It depends on Zn(2+) as a cofactor.

The protein resides in the cytoplasm. It carries out the reaction tRNA(Ile) + L-isoleucine + ATP = L-isoleucyl-tRNA(Ile) + AMP + diphosphate. Its function is as follows. Catalyzes the attachment of isoleucine to tRNA(Ile). As IleRS can inadvertently accommodate and process structurally similar amino acids such as valine, to avoid such errors it has two additional distinct tRNA(Ile)-dependent editing activities. One activity is designated as 'pretransfer' editing and involves the hydrolysis of activated Val-AMP. The other activity is designated 'posttransfer' editing and involves deacylation of mischarged Val-tRNA(Ile). The chain is Isoleucine--tRNA ligase (ileS) from Staphylococcus epidermidis (strain ATCC 35984 / DSM 28319 / BCRC 17069 / CCUG 31568 / BM 3577 / RP62A).